The following is a 266-amino-acid chain: Regulatory protein RecX (266 aa).

It belongs to the RecX family.

Its subcellular location is the cytoplasm. In terms of biological role, modulates RecA activity. The polypeptide is Regulatory protein RecX (Levilactobacillus brevis (strain ATCC 367 / BCRC 12310 / CIP 105137 / JCM 1170 / LMG 11437 / NCIMB 947 / NCTC 947) (Lactobacillus brevis)).